A 606-amino-acid polypeptide reads, in one-letter code: Anthranilate synthase alpha subunit 2, chloroplastic (606 aa).

The transit peptide at 1–49 directs the protein to the chloroplast; it reads MESIAAATFTPSRLAARPATPAAAAAPVRARAAVAAGGRRRTSRRGGVR.

It belongs to the anthranilate synthase component I family. As to quaternary structure, heterotetramer consisting of two non-identical subunits: a beta subunit and a large alpha subunit.

It localises to the plastid. Its subcellular location is the chloroplast. It carries out the reaction chorismate + L-glutamine = anthranilate + pyruvate + L-glutamate + H(+). It functions in the pathway amino-acid biosynthesis; L-tryptophan biosynthesis; L-tryptophan from chorismate: step 1/5. Feedback inhibition by tryptophan. Its function is as follows. Part of a heterotetrameric complex that catalyzes the two-step biosynthesis of anthranilate, an intermediate in the biosynthesis of L-tryptophan. In the first step, the glutamine-binding beta subunit of anthranilate synthase (AS) provides the glutamine amidotransferase activity which generates ammonia as a substrate that, along with chorismate, is used in the second step, catalyzed by the large alpha subunit of AS to produce anthranilate. In Oryza sativa subsp. japonica (Rice), this protein is Anthranilate synthase alpha subunit 2, chloroplastic.